A 467-amino-acid polypeptide reads, in one-letter code: uncharacterized protein (467 aa).

The tract at residues 416–467 (KQQRAQTAVVGTTKELVSKATHMKPPRTPPGEAEHRKRSQSLAICQWNKNSR) is disordered. A compositionally biased stretch (polar residues) spans 455 to 467 (QSLAICQWNKNSR).

This is an uncharacterized protein from Homo sapiens (Human).